The following is a 654-amino-acid chain: Fructose-1,6-bisphosphatase class 3 (654 aa).

This sequence belongs to the FBPase class 3 family. Mn(2+) serves as cofactor.

It carries out the reaction beta-D-fructose 1,6-bisphosphate + H2O = beta-D-fructose 6-phosphate + phosphate. It participates in carbohydrate biosynthesis; gluconeogenesis. The chain is Fructose-1,6-bisphosphatase class 3 from Staphylococcus haemolyticus (strain JCSC1435).